A 372-amino-acid polypeptide reads, in one-letter code: Heat-inducible transcription repressor HrcA (372 aa).

The protein belongs to the HrcA family.

Functionally, negative regulator of class I heat shock genes (grpE-dnaK-dnaJ and groELS operons). Prevents heat-shock induction of these operons. The polypeptide is Heat-inducible transcription repressor HrcA (Chloroflexus aurantiacus (strain ATCC 29366 / DSM 635 / J-10-fl)).